The following is a 35-amino-acid chain: Photosystem II reaction center protein M (35 aa).

Residues 5–25 form a helical membrane-spanning segment; sequence ILAFIATALFILVPTAFLLII.

This sequence belongs to the PsbM family. As to quaternary structure, PSII is composed of 1 copy each of membrane proteins PsbA, PsbB, PsbC, PsbD, PsbE, PsbF, PsbH, PsbI, PsbJ, PsbK, PsbL, PsbM, PsbT, PsbX, PsbY, PsbZ, Psb30/Ycf12, at least 3 peripheral proteins of the oxygen-evolving complex and a large number of cofactors. It forms dimeric complexes.

The protein resides in the plastid. Its subcellular location is the chloroplast thylakoid membrane. Its function is as follows. One of the components of the core complex of photosystem II (PSII). PSII is a light-driven water:plastoquinone oxidoreductase that uses light energy to abstract electrons from H(2)O, generating O(2) and a proton gradient subsequently used for ATP formation. It consists of a core antenna complex that captures photons, and an electron transfer chain that converts photonic excitation into a charge separation. This subunit is found at the monomer-monomer interface. This is Photosystem II reaction center protein M from Amborella trichopoda.